We begin with the raw amino-acid sequence, 177 residues long: Large ribosomal subunit protein uL6 (177 aa).

Belongs to the universal ribosomal protein uL6 family. Part of the 50S ribosomal subunit.

This protein binds to the 23S rRNA, and is important in its secondary structure. It is located near the subunit interface in the base of the L7/L12 stalk, and near the tRNA binding site of the peptidyltransferase center. In Rhodopseudomonas palustris (strain HaA2), this protein is Large ribosomal subunit protein uL6.